We begin with the raw amino-acid sequence, 107 residues long: Flagellar hook-basal body complex protein FliE (107 aa).

The protein belongs to the FliE family.

Its subcellular location is the bacterial flagellum basal body. The protein is Flagellar hook-basal body complex protein FliE of Sodalis glossinidius (strain morsitans).